A 408-amino-acid chain; its full sequence is UPF0496 protein At5g66670 (408 aa).

2 helical membrane-spanning segments follow: residues 239 to 259 and 262 to 282; these read VVFA…AAMM and PVLS…GMWC.

This sequence belongs to the UPF0496 family.

The protein localises to the membrane. This Arabidopsis thaliana (Mouse-ear cress) protein is UPF0496 protein At5g66670.